The following is an 86-amino-acid chain: MKIDKEQIIKAHQLHKNDVGSVQVQISILTDQIKKLTDHLLANKKDFISKRGLYTKVSKRKRLLKYLKERNIETYRDLIKNLNLRG.

Belongs to the universal ribosomal protein uS15 family. As to quaternary structure, part of the 30S ribosomal subunit. Forms a bridge to the 50S subunit in the 70S ribosome, contacting the 23S rRNA.

One of the primary rRNA binding proteins, it binds directly to 16S rRNA where it helps nucleate assembly of the platform of the 30S subunit by binding and bridging several RNA helices of the 16S rRNA. In terms of biological role, forms an intersubunit bridge (bridge B4) with the 23S rRNA of the 50S subunit in the ribosome. The chain is Small ribosomal subunit protein uS15 from Mycoplasma genitalium (strain ATCC 33530 / DSM 19775 / NCTC 10195 / G37) (Mycoplasmoides genitalium).